The primary structure comprises 211 residues: Potassium-transporting ATPase KdpC subunit (211 aa).

The chain crosses the membrane as a helical span at residues 13-35 (VVTMVLTGLLYPLAVTGLAQLLF).

Belongs to the KdpC family. As to quaternary structure, the system is composed of three essential subunits: KdpA, KdpB and KdpC.

The protein localises to the cell membrane. Part of the high-affinity ATP-driven potassium transport (or Kdp) system, which catalyzes the hydrolysis of ATP coupled with the electrogenic transport of potassium into the cytoplasm. This subunit acts as a catalytic chaperone that increases the ATP-binding affinity of the ATP-hydrolyzing subunit KdpB by the formation of a transient KdpB/KdpC/ATP ternary complex. This chain is Potassium-transporting ATPase KdpC subunit, found in Myxococcus xanthus.